The following is a 453-amino-acid chain: MKREARNYIDNKLKPPKAFFDWCFSQIPTYKWSNKKETILASNRKNCSVIEQKLRKNSRLTFFGKLNVFGIVLVTSKRIEIQSYAFWNRVVEGKEMIEFDLVNFEQFADGEHVKVAISDGKMWFGLIPIYGGMSGGPYSMIRLFENDWKEKIRSKSELKYLEIPHLDFKEIETIYKYRVEIEFLQKIKARQLSKEVMYPVTQYTNGSFRKTVDMRTINAKWLKENKPFFKNSDRGFMEFELARRIQKRRGKVVSGIEKYLDYRAINKIPEGVGIVRFQNWIIKNKVDFSYYLDYLNLMRDLNIAIDSENIIMPKNLVIAHDNAVKLLYQMKHEVEEQQYKMRFEKIKDLEKTIDNYAFIVPKQASDLLTEGKALSHCVGGSNYIKQHIEGKTTIIFVRDKQYLEKSLYTLEYKNGQIYQLRGKHNCEPTHDVQEAANNWAASVKSKTKVLQHS.

To S.faecalis plasmid PAM373 EP0012.

This is an uncharacterized protein from Listeria innocua serovar 6a (strain ATCC BAA-680 / CLIP 11262).